We begin with the raw amino-acid sequence, 352 residues long: Glycerol-1-phosphate dehydrogenase [NAD(P)+] (352 aa).

NAD(+) contacts are provided by residues 98 to 102 (GKPID) and 120 to 123 (TAAS). Asp125 is a substrate binding site. Ser129 is a binding site for NAD(+). Substrate is bound at residue Asp172. Zn(2+) contacts are provided by Asp172 and His252. His256 is a substrate binding site. His268 contacts Zn(2+).

It belongs to the glycerol-1-phosphate dehydrogenase family. Requires Zn(2+) as cofactor.

It is found in the cytoplasm. The catalysed reaction is sn-glycerol 1-phosphate + NAD(+) = dihydroxyacetone phosphate + NADH + H(+). It catalyses the reaction sn-glycerol 1-phosphate + NADP(+) = dihydroxyacetone phosphate + NADPH + H(+). It functions in the pathway membrane lipid metabolism; glycerophospholipid metabolism. Catalyzes the NAD(P)H-dependent reduction of dihydroxyacetonephosphate (DHAP or glycerone phosphate) to glycerol 1-phosphate (G1P). The G1P thus generated is used as the glycerophosphate backbone of phospholipids in the cellular membranes of Archaea. The protein is Glycerol-1-phosphate dehydrogenase [NAD(P)+] of Natronomonas pharaonis (strain ATCC 35678 / DSM 2160 / CIP 103997 / JCM 8858 / NBRC 14720 / NCIMB 2260 / Gabara) (Halobacterium pharaonis).